The sequence spans 109 residues: Cell cycle protein GpsB (109 aa).

A coiled-coil region spans residues 36-63; it reads IKDYETYAALVKSLRQEIADLKEELTRK.

It belongs to the GpsB family. As to quaternary structure, forms polymers through the coiled coil domains. Interacts with PBP1, MreC and EzrA.

The protein localises to the cytoplasm. In terms of biological role, divisome component that associates with the complex late in its assembly, after the Z-ring is formed, and is dependent on DivIC and PBP2B for its recruitment to the divisome. Together with EzrA, is a key component of the system that regulates PBP1 localization during cell cycle progression. Its main role could be the removal of PBP1 from the cell pole after pole maturation is completed. Also contributes to the recruitment of PBP1 to the division complex. Not essential for septum formation. This chain is Cell cycle protein GpsB, found in Streptococcus pneumoniae serotype 4 (strain ATCC BAA-334 / TIGR4).